A 195-amino-acid chain; its full sequence is FMN-dependent NADH:quinone oxidoreductase (195 aa).

FMN is bound by residues Ser10, 16–18, 91–94, and 135–138; these read SQS, MYNF, and TRGG.

It belongs to the azoreductase type 1 family. In terms of assembly, homodimer. FMN serves as cofactor.

The catalysed reaction is 2 a quinone + NADH + H(+) = 2 a 1,4-benzosemiquinone + NAD(+). The enzyme catalyses N,N-dimethyl-1,4-phenylenediamine + anthranilate + 2 NAD(+) = 2-(4-dimethylaminophenyl)diazenylbenzoate + 2 NADH + 2 H(+). In terms of biological role, quinone reductase that provides resistance to thiol-specific stress caused by electrophilic quinones. Its function is as follows. Also exhibits azoreductase activity. Catalyzes the reductive cleavage of the azo bond in aromatic azo compounds to the corresponding amines. This is FMN-dependent NADH:quinone oxidoreductase from Vibrio vulnificus (strain YJ016).